The primary structure comprises 175 residues: MSSVDLASYIRTIPDFPKPGILFRDINPMLRSPEAVAEVIRLLSLVCERTRPDLIVGIESRGFIVGAPLAHQCGLGFVPVRKPGKLPGDVVGIDYSLEYGSDRLEIQADALVGQPRVLVVDDLLATGGTAAATAQLVTQAGGELVGFAFVIELKGLGGRTVLPKDLSVDSLLAYD.

Belongs to the purine/pyrimidine phosphoribosyltransferase family. As to quaternary structure, homodimer.

Its subcellular location is the cytoplasm. It catalyses the reaction AMP + diphosphate = 5-phospho-alpha-D-ribose 1-diphosphate + adenine. Its pathway is purine metabolism; AMP biosynthesis via salvage pathway; AMP from adenine: step 1/1. Catalyzes a salvage reaction resulting in the formation of AMP, that is energically less costly than de novo synthesis. This is Adenine phosphoribosyltransferase from Synechococcus sp. (strain CC9902).